Consider the following 63-residue polypeptide: MPKMKSVRGAAKRFKVGKNKIKRGSAFRSHILTKKPSKRMRDLRQSQYVDSTNVSAVKKMLCI.

It belongs to the bacterial ribosomal protein bL35 family.

This is Large ribosomal subunit protein bL35 from Campylobacter fetus subsp. fetus (strain 82-40).